Consider the following 353-residue polypeptide: Abasic site processing protein HMCES (353 aa).

Residue C2 is the Nucleophile of the active site. C2 is modified (thiazolidine linkage to a ring-opened DNA abasic site). E127 is a catalytic residue. Glycyl lysine isopeptide (Lys-Gly) (interchain with G-Cter in SUMO2) cross-links involve residues K148 and K151. At S160 the chain carries Phosphoserine. Glycyl lysine isopeptide (Lys-Gly) (interchain with G-Cter in SUMO2) cross-links involve residues K274 and K275. The interval 292–353 (TKSPKKEVPD…DEPVAKRPNS (62 aa)) is disordered. S294 is modified (phosphoserine). Basic and acidic residues predominate over residues 295–307 (PKKEVPDSPKKDA). A Glycyl lysine isopeptide (Lys-Gly) (interchain with G-Cter in SUMO2) cross-link involves residue K305. S321 is modified (phosphoserine). Positions 332–338 (SLLDRWL) match the PIP-box motif. Residues 336–353 (RWLKQEKEDEPVAKRPNS) show a composition bias toward basic and acidic residues. Residues K339 and K342 each participate in a glycyl lysine isopeptide (Lys-Gly) (interchain with G-Cter in SUMO2) cross-link.

It belongs to the SOS response-associated peptidase family. Interacts (via PIP-box motif) with PCNA. Ubiquitinated; the covalent HMCES DNA-protein cross-link is ubiquitinated, leading to its degradation by the proteasome.

The protein localises to the chromosome. With respect to regulation, formation and reversal of DNA-protein cross-link depends on DNA context. Catalyzes formation of the thiazolidine linkage in presence of abasic sites in single-stranded DNA. Mediates the reversal of the thiazolidine cross-link in presence of double stranded DNA. Sensor of abasic sites in single-stranded DNA (ssDNA) required to preserve genome integrity by promoting error-free repair of abasic sites. Acts as an enzyme that recognizes and binds abasic sites in ssDNA at replication forks and chemically modifies the lesion by forming a covalent cross-link with DNA: forms a stable thiazolidine linkage between a ring-opened abasic site and the alpha-amino and sulfhydryl substituents of its N-terminal catalytic cysteine residue. Promotes error-free repair by protecting abasic sites from translesion synthesis (TLS) polymerases and endonucleases that are error-prone and would generate mutations and double-strand breaks. The HMCES DNA-protein cross-link is then either reversed or degraded. HMCES is able to catalyze the reversal of its thiazolidine cross-link and cycle between a cross-link and a non-cross-linked state depending on DNA context: mediates self-reversal of the thiazolidine cross-link in double stranded DNA, allowing APEX1 to initiate downstream repair of abasic sites. The HMCES DNA-protein cross-link can also be degraded by the SPRTN metalloprotease following unfolding by the BRIP1/FANCJ helicase. Has preference for ssDNA, but can also accommodate double-stranded DNA with 3' or 5' overhang (dsDNA), and dsDNA-ssDNA 3' junction. Plays a protective role during somatic hypermutation of immunoglobulin genes in B-cells: acts via its ability to form covalent cross-links with abasic sites, thereby limiting the accumulation of deletions in somatic hypermutation target regions. Also involved in class switch recombination (CSR) in B-cells independently of the formation of a DNA-protein cross-link: acts by binding and protecting ssDNA overhangs to promote DNA double-strand break repair through the microhomology-mediated alternative-end-joining (Alt-EJ) pathway. Acts as a protease: mediates autocatalytic processing of its N-terminal methionine in order to expose the catalytic cysteine. This is Abasic site processing protein HMCES from Rattus norvegicus (Rat).